The following is a 204-amino-acid chain: FMN-dependent NADH:quinone oxidoreductase 2 (204 aa).

FMN is bound by residues Ser10 and 16–18; that span reads SIS.

This sequence belongs to the azoreductase type 1 family. In terms of assembly, homodimer. It depends on FMN as a cofactor.

The catalysed reaction is 2 a quinone + NADH + H(+) = 2 a 1,4-benzosemiquinone + NAD(+). It carries out the reaction N,N-dimethyl-1,4-phenylenediamine + anthranilate + 2 NAD(+) = 2-(4-dimethylaminophenyl)diazenylbenzoate + 2 NADH + 2 H(+). Functionally, quinone reductase that provides resistance to thiol-specific stress caused by electrophilic quinones. In terms of biological role, also exhibits azoreductase activity. Catalyzes the reductive cleavage of the azo bond in aromatic azo compounds to the corresponding amines. The sequence is that of FMN-dependent NADH:quinone oxidoreductase 2 from Jannaschia sp. (strain CCS1).